Reading from the N-terminus, the 333-residue chain is Phenylalanine--tRNA ligase alpha subunit (333 aa).

E254 lines the Mg(2+) pocket.

It belongs to the class-II aminoacyl-tRNA synthetase family. Phe-tRNA synthetase alpha subunit type 1 subfamily. Tetramer of two alpha and two beta subunits. The cofactor is Mg(2+).

The protein resides in the cytoplasm. It catalyses the reaction tRNA(Phe) + L-phenylalanine + ATP = L-phenylalanyl-tRNA(Phe) + AMP + diphosphate + H(+). The chain is Phenylalanine--tRNA ligase alpha subunit (pheS) from Xylella fastidiosa (strain 9a5c).